A 420-amino-acid polypeptide reads, in one-letter code: D-tagatose-1,6-bisphosphate aldolase subunit GatZ (420 aa).

Belongs to the GatZ/KbaZ family. GatZ subfamily. In terms of assembly, forms a complex with GatY.

It participates in carbohydrate metabolism; D-tagatose 6-phosphate degradation; D-glyceraldehyde 3-phosphate and glycerone phosphate from D-tagatose 6-phosphate: step 2/2. Its function is as follows. Component of the tagatose-1,6-bisphosphate aldolase GatYZ that is required for full activity and stability of the Y subunit. Could have a chaperone-like function for the proper and stable folding of GatY. When expressed alone, GatZ does not show any aldolase activity. Is involved in the catabolism of galactitol. In Escherichia coli O45:K1 (strain S88 / ExPEC), this protein is D-tagatose-1,6-bisphosphate aldolase subunit GatZ.